A 1143-amino-acid chain; its full sequence is Exportin-T (1143 aa).

A disordered region spans residues 566–593 (ARNKLRAAQGSGRTTPSSSDNVDLGPSS). A compositionally biased stretch (polar residues) spans 576 to 593 (SGRTTPSSSDNVDLGPSS).

Belongs to the exportin family.

Its subcellular location is the nucleus. It localises to the cytoplasm. Its function is as follows. tRNA nucleus export receptor which facilitates tRNA translocation across the nuclear pore complex. Involved in pre-tRNA splicing, probably by affecting the interaction of pre-tRNA with splicing endonuclease. This Cryptococcus neoformans var. neoformans serotype D (strain JEC21 / ATCC MYA-565) (Filobasidiella neoformans) protein is Exportin-T (LOS1).